Here is a 237-residue protein sequence, read N- to C-terminus: Phosphoribosylaminoimidazole-succinocarboxamide synthase (237 aa).

It belongs to the SAICAR synthetase family.

It catalyses the reaction 5-amino-1-(5-phospho-D-ribosyl)imidazole-4-carboxylate + L-aspartate + ATP = (2S)-2-[5-amino-1-(5-phospho-beta-D-ribosyl)imidazole-4-carboxamido]succinate + ADP + phosphate + 2 H(+). It functions in the pathway purine metabolism; IMP biosynthesis via de novo pathway; 5-amino-1-(5-phospho-D-ribosyl)imidazole-4-carboxamide from 5-amino-1-(5-phospho-D-ribosyl)imidazole-4-carboxylate: step 1/2. The sequence is that of Phosphoribosylaminoimidazole-succinocarboxamide synthase from Yersinia enterocolitica serotype O:8 / biotype 1B (strain NCTC 13174 / 8081).